A 959-amino-acid chain; its full sequence is Probable serine/threonine-protein kinase DDB_G0291664 (959 aa).

The disordered stretch occupies residues 154–213 (QQQQQQQLTPPPSPPLLPIPQPPAQNEEQQLTQPPSIPPPQQKQIKIQKSDRGTQVKSIT). Over residues 162–176 (TPPPSPPLLPIPQPP) the composition is skewed to pro residues. ANK repeat units lie at residues 294–324 (KGET…CMGI) and 333–362 (LNKN…PLKM). In terms of domain architecture, Protein kinase spans 482-762 (IDFHTQIGSA…EVGIIETEFL (281 aa)). ATP is bound by residues 488 to 496 (IGSAGNASV) and Lys-509. The active-site Proton acceptor is Asp-610. The interval 904 to 959 (NNINNNNNNNNNCNNSKKFKTTSESTSALGSDASSSSSPSSSSPSPKYSASIYHHQ) is disordered.

Belongs to the protein kinase superfamily. Ser/Thr protein kinase family.

The enzyme catalyses L-seryl-[protein] + ATP = O-phospho-L-seryl-[protein] + ADP + H(+). It carries out the reaction L-threonyl-[protein] + ATP = O-phospho-L-threonyl-[protein] + ADP + H(+). In Dictyostelium discoideum (Social amoeba), this protein is Probable serine/threonine-protein kinase DDB_G0291664.